Consider the following 172-residue polypeptide: Ribosome maturation factor RimM (172 aa).

The PRC barrel domain occupies 96-168 (DGEFYYHEII…RVQVELMEGL (73 aa)).

This sequence belongs to the RimM family. As to quaternary structure, binds ribosomal protein uS19.

The protein resides in the cytoplasm. Functionally, an accessory protein needed during the final step in the assembly of 30S ribosomal subunit, possibly for assembly of the head region. Essential for efficient processing of 16S rRNA. May be needed both before and after RbfA during the maturation of 16S rRNA. It has affinity for free ribosomal 30S subunits but not for 70S ribosomes. This chain is Ribosome maturation factor RimM, found in Streptococcus agalactiae serotype Ia (strain ATCC 27591 / A909 / CDC SS700).